The following is a 363-amino-acid chain: 3-dehydroquinate synthase (363 aa).

NAD(+) is bound by residues 109 to 113 (GASTD), 133 to 134 (TT), Lys146, and Lys155. Positions 188, 251, and 267 each coordinate Zn(2+).

It belongs to the sugar phosphate cyclases superfamily. Dehydroquinate synthase family. It depends on NAD(+) as a cofactor. Co(2+) serves as cofactor. The cofactor is Zn(2+).

Its subcellular location is the cytoplasm. The enzyme catalyses 7-phospho-2-dehydro-3-deoxy-D-arabino-heptonate = 3-dehydroquinate + phosphate. The protein operates within metabolic intermediate biosynthesis; chorismate biosynthesis; chorismate from D-erythrose 4-phosphate and phosphoenolpyruvate: step 2/7. Catalyzes the conversion of 3-deoxy-D-arabino-heptulosonate 7-phosphate (DAHP) to dehydroquinate (DHQ). The sequence is that of 3-dehydroquinate synthase from Streptomyces coelicolor (strain ATCC BAA-471 / A3(2) / M145).